Here is a 429-residue protein sequence, read N- to C-terminus: G2/mitotic-specific cyclin-B1 (429 aa).

Over residues 1-14 the composition is skewed to polar residues; it reads MALRVTRNTKLNTE. Disordered regions lie at residues 1–21 and 71–128; these read MALR…KVSM and TGKV…PMET. Lysine 73 bears the N6-acetyllysine mark. Over residues 92 to 106 the composition is skewed to acidic residues; that stretch reads PEVELAEPEPEPEPV. A Phosphoserine; by CDK1 modification is found at serine 122. Serine 124 carries the phosphoserine modification. Serine 129 carries the post-translational modification Phosphoserine; by PLK1. Position 143 is a phosphoserine (serine 143). Interaction with CDK2 stretches follow at residues 165–173 and 254–257; these read EYVKDIYAY and YEEM. The residue at position 317 (threonine 317) is a Phosphothreonine.

It belongs to the cyclin family. Cyclin AB subfamily. Interacts with the CDC2 protein kinase to form a serine/threonine kinase holoenzyme complex also known as maturation promoting factor (MPF). The cyclin subunit imparts substrate specificity to the complex. Binds HEI10. Interacts with catalytically active RALBP1 and CDC2 during mitosis to form an endocytotic complex during interphase. Interacts with CCNF; interaction is required for nuclear localization. Interacts with CDK5RAP3. Interacts with RFPL4A and UBE2A. Interacts with INCA1. Post-translationally, ubiquitinated by the SCF(NIPA) complex during interphase, leading to its destruction. Not ubiquitinated during G2/M phases. In terms of processing, phosphorylated by PLK1 at Ser-129 on centrosomes during prophase: phosphorylation by PLK1 does not cause nuclear import. Phosphorylation at Ser-143 was also reported to be mediated by PLK1 but Ser-129 seems to be the primary phosphorylation site.

Its subcellular location is the cytoplasm. It is found in the nucleus. The protein localises to the cytoskeleton. The protein resides in the microtubule organizing center. It localises to the centrosome. Its function is as follows. Essential for the control of the cell cycle at the G2/M (mitosis) transition. In Cricetulus griseus (Chinese hamster), this protein is G2/mitotic-specific cyclin-B1 (CCNB1).